The primary structure comprises 130 residues: Spore coat protein M (130 aa).

In terms of biological role, involved in spore outer coat assembly. May be part of a cross-linked insoluble skeleton that surrounds the spore, serves as a matrix for the assembly of additional outer coat material, and confers structural stability to the final structure. The sequence is that of Spore coat protein M (cotM) from Bacillus subtilis (strain 168).